Here is a 563-residue protein sequence, read N- to C-terminus: Cytochrome b (563 aa).

Transmembrane regions (helical) follow at residues 36–61 (SYWL…LLYY), 81–104 (SVLL…HMFR), 119–141 (WVTG…SLVS), 193–220 (RLLG…ERYG), 255–276 (LSIV…ANIN), 326–345 (ILTI…LPFL), 358–379 (FWTW…WGYL), 387–409 (TSAQ…YLWP), 436–454 (ILLG…FNFI), 458–476 (TLIN…IYAL), 505–527 (IAFF…MWTL), and 539–557 (MDLG…LYHY). 2 residues coordinate heme: H87 and H101. Heme contacts are provided by H198 and H212.

Belongs to the cytochrome b family. In terms of assembly, it is a component of at least 2 distinct terminal oxidases, the quinol oxidase (SoxABC) and the alternate quinol oxidase with the core components SoxM and a Rieske Fe-S protein.

The protein localises to the cell membrane. Functionally, binds 2 heme groups (b586 and b606) which are not covalently bound to the protein. The protein is Cytochrome b (soxC) of Sulfolobus acidocaldarius (strain ATCC 33909 / DSM 639 / JCM 8929 / NBRC 15157 / NCIMB 11770).